A 438-amino-acid chain; its full sequence is Cyclic 2,3-diphosphoglycerate synthetase (438 aa).

This sequence belongs to the cyclic 2,3-diphosphoglycerate synthetase family.

The protein resides in the cytoplasm. The catalysed reaction is (2R)-2,3-bisphosphoglycerate + ATP + H(+) = cyclic (2R)-2,3-bisphosphoglycerate + ADP + phosphate. Catalyzes the formation of cyclic 2,3-diphosphoglycerate (cDPG) by formation of an intramolecular phosphoanhydride bond at the expense of ATP. This chain is Cyclic 2,3-diphosphoglycerate synthetase, found in Thermococcus gammatolerans (strain DSM 15229 / JCM 11827 / EJ3).